We begin with the raw amino-acid sequence, 143 residues long: Large ribosomal subunit protein uL11 (143 aa).

This sequence belongs to the universal ribosomal protein uL11 family. As to quaternary structure, part of the ribosomal stalk of the 50S ribosomal subunit. Interacts with L10 and the large rRNA to form the base of the stalk. L10 forms an elongated spine to which L12 dimers bind in a sequential fashion forming a multimeric L10(L12)X complex. In terms of processing, one or more lysine residues are methylated.

Its function is as follows. Forms part of the ribosomal stalk which helps the ribosome interact with GTP-bound translation factors. This is Large ribosomal subunit protein uL11 from Borrelia garinii subsp. bavariensis (strain ATCC BAA-2496 / DSM 23469 / PBi) (Borreliella bavariensis).